The following is a 314-amino-acid chain: MPIKIPADLPACAALESENIFVMTEDRAVAQDIRPLEIVIVNLMPTKIATETQLLRLLGNSPLQVNITLLRTEAHESKNTPAQHLERFYKTFNEIRHGSFDGMIVTGAPVEHLPFEDVDYWHELLDIMNYAASHVYSTLYICWAAQAALYHFYGIPKFSLPQKISGIFNHDILLPDCRLFRGFDDTFTAPHSRNTEVRAGHILETPQLRLLAQSEQAGVTLVERVDHSQVFMTGHLEYDRGTLDAEYRRDVDRGLKPRVPEHYYPHDDPAAMPRMNWRAHAHLFYCNWLNYYVYQETPFSLTAIAQNREARAGA.

Cys142 functions as the Acyl-thioester intermediate in the catalytic mechanism. Residues Lys163 and Ser192 each coordinate substrate. His235 (proton acceptor) is an active-site residue. Residue Glu237 is part of the active site. Residue Arg249 participates in substrate binding.

This sequence belongs to the MetA family.

The protein localises to the cytoplasm. It carries out the reaction L-homoserine + acetyl-CoA = O-acetyl-L-homoserine + CoA. It functions in the pathway amino-acid biosynthesis; L-methionine biosynthesis via de novo pathway; O-acetyl-L-homoserine from L-homoserine: step 1/1. In terms of biological role, transfers an acetyl group from acetyl-CoA to L-homoserine, forming acetyl-L-homoserine. This Desulfovibrio desulfuricans (strain ATCC 27774 / DSM 6949 / MB) protein is Homoserine O-acetyltransferase.